The following is a 337-amino-acid chain: DNA-directed RNA polymerase subunit alpha (337 aa).

An alpha N-terminal domain (alpha-NTD) region spans residues 1 to 226 (MLIAQRPTLT…ELFGLARELN (226 aa)). Residues 243 to 337 (LAADLALEIE…DTSFAEDEQL (95 aa)) are alpha C-terminal domain (alpha-CTD). The interval 315 to 337 (FDPSAVVNDFEDDDTSFAEDEQL) is disordered. Positions 323-337 (DFEDDDTSFAEDEQL) are enriched in acidic residues.

This sequence belongs to the RNA polymerase alpha chain family. Homodimer. The RNAP catalytic core consists of 2 alpha, 1 beta, 1 beta' and 1 omega subunit. When a sigma factor is associated with the core the holoenzyme is formed, which can initiate transcription.

The catalysed reaction is RNA(n) + a ribonucleoside 5'-triphosphate = RNA(n+1) + diphosphate. Functionally, DNA-dependent RNA polymerase catalyzes the transcription of DNA into RNA using the four ribonucleoside triphosphates as substrates. In Kineococcus radiotolerans (strain ATCC BAA-149 / DSM 14245 / SRS30216), this protein is DNA-directed RNA polymerase subunit alpha.